Consider the following 219-residue polypeptide: Histone H1.4 (219 aa).

Residues 1–15 show a composition bias toward low complexity; it reads MSETAPAAPAAPAPA. The disordered stretch occupies residues 1-41; that stretch reads MSETAPAAPAAPAPAEKTPVKKKARKSAGAAKRKASGPPVS. Serine 2 is modified (N-acetylserine). Position 2 is a phosphoserine (serine 2). An N6-acetyllysine modification is found at lysine 17. The residue at position 18 (threonine 18) is a Phosphothreonine. Residues 20–35 show a composition bias toward basic residues; the sequence is VKKKARKSAGAAKRKA. Position 26 is an N6-acetyllysine; alternate (lysine 26). Lysine 26 carries the N6-methyllysine; alternate modification. Lysine 34 is modified (N6-(beta-hydroxybutyryl)lysine; alternate). Residue lysine 34 is modified to N6-succinyllysine; alternate. Residue serine 36 is modified to Phosphoserine. The H15 domain maps to 36 to 109; that stretch reads SGPPVSELIT…GASGSFKLNK (74 aa). At lysine 52 the chain carries N6-(beta-hydroxybutyryl)lysine. Arginine 54 carries the citrulline modification. 4 positions are modified to N6-(beta-hydroxybutyryl)lysine: lysine 64, lysine 85, lysine 90, and lysine 106. Residues 92-219 form a disordered region; it reads TLVQTKGTGA…KPKKAAAKKK (128 aa). Over residues 119 to 140 the composition is skewed to basic residues; that stretch reads KAKKAGAAKAKKPAGAAKKPKK. Position 146 is a phosphothreonine (threonine 146). 2 stretches are compositionally biased toward basic residues: residues 149-160 and 168-185; these read KSAKKTPKKAKK and KKAK…KKAP. Serine 150 carries the ADP-ribosylserine modification. Serine 187 carries the post-translational modification Phosphoserine. The segment covering 192–219 has biased composition (basic residues); the sequence is KAVKPKAAKPKTAKPKAAKPKKAAAKKK.

This sequence belongs to the histone H1/H5 family. In terms of processing, H1 histones are progressively phosphorylated during the cell cycle, becoming maximally phosphorylated during late G2 phase and M phase, and being dephosphorylated sharply thereafter. Post-translationally, acetylated at Lys-26. Deacetylated at Lys-26 by SIRT1. Citrullination at Arg-54 (H1R54ci) by PADI4 takes place within the DNA-binding site of H1 and results in its displacement from chromatin and global chromatin decondensation, thereby promoting pluripotency and stem cell maintenance. In terms of processing, ADP-ribosylated on Ser-150 in response to DNA damage.

The protein localises to the nucleus. It is found in the chromosome. Functionally, histone H1 protein binds to linker DNA between nucleosomes forming the macromolecular structure known as the chromatin fiber. Histones H1 are necessary for the condensation of nucleosome chains into higher-order structured fibers. Also acts as a regulator of individual gene transcription through chromatin remodeling, nucleosome spacing and DNA methylation. In Homo sapiens (Human), this protein is Histone H1.4.